A 127-amino-acid chain; its full sequence is Large ribosomal subunit protein bL12 (127 aa).

Belongs to the bacterial ribosomal protein bL12 family. Homodimer. Part of the ribosomal stalk of the 50S ribosomal subunit. Forms a multimeric L10(L12)X complex, where L10 forms an elongated spine to which 2 to 4 L12 dimers bind in a sequential fashion. Binds GTP-bound translation factors.

In terms of biological role, forms part of the ribosomal stalk which helps the ribosome interact with GTP-bound translation factors. Is thus essential for accurate translation. This Streptomyces coelicolor (strain ATCC BAA-471 / A3(2) / M145) protein is Large ribosomal subunit protein bL12.